Consider the following 118-residue polypeptide: Ribulose bisphosphate carboxylase small subunit (118 aa).

Belongs to the RuBisCO small chain family. In terms of assembly, heterohexadecamer of 8 large and 8 small subunits.

RuBisCO catalyzes two reactions: the carboxylation of D-ribulose 1,5-bisphosphate, the primary event in carbon dioxide fixation, as well as the oxidative fragmentation of the pentose substrate. Both reactions occur simultaneously and in competition at the same active site. Although the small subunit is not catalytic it is essential for maximal activity. The chain is Ribulose bisphosphate carboxylase small subunit from Rhodobacter capsulatus (Rhodopseudomonas capsulata).